The chain runs to 47 residues: Small, acid-soluble spore protein N (47 aa).

2 stretches are compositionally biased toward polar residues: residues 1–11 and 29–47; these read MGNPKSNQQPF and KQMQ…TKGE. The disordered stretch occupies residues 1–47; the sequence is MGNPKSNQQPFVPQHIGTKPREAGGNKGKQMQDQSGQHPQVIQTKGE.

Belongs to the SspN family.

It is found in the spore core. The chain is Small, acid-soluble spore protein N from Anoxybacillus flavithermus (strain DSM 21510 / WK1).